The chain runs to 205 residues: Cytochrome c biogenesis ATP-binding export protein CcmA (205 aa).

One can recognise an ABC transporter domain in the interval 2–204 (LEVSNLTAIR…SPKLRKIKLG (203 aa)). 34 to 41 (GRNGTGKT) provides a ligand contact to ATP.

This sequence belongs to the ABC transporter superfamily. CcmA exporter (TC 3.A.1.107) family. In terms of assembly, the complex is composed of two ATP-binding proteins (CcmA) and two transmembrane proteins (CcmB).

The protein localises to the cell inner membrane. The catalysed reaction is heme b(in) + ATP + H2O = heme b(out) + ADP + phosphate + H(+). Functionally, part of the ABC transporter complex CcmAB involved in the biogenesis of c-type cytochromes; once thought to export heme, this seems not to be the case, but its exact role is uncertain. Responsible for energy coupling to the transport system. In Vibrio vulnificus (strain YJ016), this protein is Cytochrome c biogenesis ATP-binding export protein CcmA.